The sequence spans 97 residues: Cytochrome c2 iso-2 (97 aa).

Positions 10, 13, 14, and 75 each coordinate heme c.

Belongs to the cytochrome c family. Post-translationally, binds 1 heme c group covalently per subunit.

Functionally, cytochrome c2 is found mainly in purple, non-sulfur, photosynthetic bacteria where it functions as the electron donor to the oxidized bacteriochlorophyll in the photophosphorylation pathway. However, it may also have a role in the respiratory chain and is found in some non-photosynthetic bacteria. This chain is Cytochrome c2 iso-2, found in Magnetospirillum molischianum (Rhodospirillum molischianum).